We begin with the raw amino-acid sequence, 508 residues long: Photosystem II CP47 reaction center protein (508 aa).

6 helical membrane passes run 21 to 36 (AVHI…WAGS), 101 to 115 (IVFS…IWHW), 140 to 156 (GIHL…FGAF), 203 to 218 (IAAG…FHLS), 237 to 252 (VLSS…AFIV), and 457 to 472 (TFAL…HGAR).

The protein belongs to the PsbB/PsbC family. PsbB subfamily. As to quaternary structure, PSII is composed of 1 copy each of membrane proteins PsbA, PsbB, PsbC, PsbD, PsbE, PsbF, PsbH, PsbI, PsbJ, PsbK, PsbL, PsbM, PsbT, PsbX, PsbY, PsbZ, Psb30/Ycf12, at least 3 peripheral proteins of the oxygen-evolving complex and a large number of cofactors. It forms dimeric complexes. Binds multiple chlorophylls. PSII binds additional chlorophylls, carotenoids and specific lipids. serves as cofactor.

Its subcellular location is the plastid. It localises to the chloroplast thylakoid membrane. Functionally, one of the components of the core complex of photosystem II (PSII). It binds chlorophyll and helps catalyze the primary light-induced photochemical processes of PSII. PSII is a light-driven water:plastoquinone oxidoreductase, using light energy to abstract electrons from H(2)O, generating O(2) and a proton gradient subsequently used for ATP formation. The polypeptide is Photosystem II CP47 reaction center protein (Gnetum parvifolium (Small-leaved jointfir)).